The following is a 241-amino-acid chain: Phycocyanobilin:ferredoxin oxidoreductase (241 aa).

The protein belongs to the HY2 family.

The enzyme catalyses (2R,3Z)-phycocyanobilin + 4 oxidized [2Fe-2S]-[ferredoxin] = biliverdin IXalpha + 4 reduced [2Fe-2S]-[ferredoxin] + 4 H(+). Catalyzes the four-electron reduction of biliverdin IX-alpha (2-electron reduction at both the A and D rings); the reaction proceeds via an isolatable 2-electron intermediate, 181,182-dihydrobiliverdin. The protein is Phycocyanobilin:ferredoxin oxidoreductase of Prochlorococcus marinus (strain MIT 9301).